A 106-amino-acid chain; its full sequence is Tubulin-specific chaperone A (106 aa).

At serine 94 the chain carries Phosphoserine.

It belongs to the TBCA family.

The protein resides in the cytoplasm. The protein localises to the cytoskeleton. Tubulin-folding protein; involved in the early step of the tubulin folding pathway. The protein is Tubulin-specific chaperone A (RBL2) of Saccharomyces cerevisiae (strain ATCC 204508 / S288c) (Baker's yeast).